A 259-amino-acid polypeptide reads, in one-letter code: Polycomb group RING finger protein 1 (259 aa).

Ala2 is subject to N-acetylalanine. At Ser3 the chain carries Phosphoserine. Lys24 is covalently cross-linked (Glycyl lysine isopeptide (Lys-Gly) (interchain with G-Cter in SUMO2)). The RING-type zinc finger occupies 47–86 (CCLCAGYFVDATTITECLHTFCKSCIVKYLQTSKYCPMCN). A required for repressor activity region spans residues 86–247 (NIKIHETQPL…LSRWFGKPSP (162 aa)). Lys88 is covalently cross-linked (Glycyl lysine isopeptide (Lys-Gly) (interchain with G-Cter in SUMO2)). Residues 150–255 (LPFSSFDHSK…SPLLLQYSVK (106 aa)) form a required for the interaction with the KDM2B-SKP1 heterodimeric complex region. Residues 167–255 (EQLNLCLERL…SPLLLQYSVK (89 aa)) are RING-finger and WD40-associated ubiquitin-like domain (RAWUL); sufficient for interaction with BCOR and BCORL1.

In terms of assembly, interacts with BCORL1, forming heterodimers. The PCGF1-BCORL1 heterodimeric complex interacts with the KDM2B-SKP1 heterodimeric complex to form a homotetrameric polycomb repression complex 1 (PRC1.1). Component of the repressive BCOR complex containing a Polycomb group subcomplex at least composed of RYBP, RING1 and RNF2/RING2. Specifically interacts with BCOR, RING1 and RNF2/RING2. Component of a PRC1-like complex. Interacts with CBX6, CBX7 and CBX8. Interacts with DPPA4, NANOG, POU5F1 and RYBP. As to expression, ubiquitous.

It localises to the nucleus. Functionally, component of the Polycomb group (PcG) multiprotein BCOR complex, a complex required to maintain the transcriptionally repressive state of some genes, such as BCL6 and the cyclin-dependent kinase inhibitor, CDKN1A. Transcriptional repressor that may be targeted to the DNA by BCL6; this transcription repressor activity may be related to PKC signaling pathway. Represses CDKN1A expression by binding to its promoter, and this repression is dependent on the retinoic acid response element (RARE element). Promotes cell cycle progression and enhances cell proliferation as well. May have a positive role in tumor cell growth by down-regulating CDKN1A. Component of a Polycomb group (PcG) multiprotein PRC1-like complex, a complex class required to maintain the transcriptionally repressive state of many genes, including Hox genes, throughout development. PcG PRC1 complex acts via chromatin remodeling and modification of histones; it mediates monoubiquitination of histone H2A 'Lys-119', rendering chromatin heritably changed in its expressibility. Within the PRC1-like complex, regulates RNF2 ubiquitin ligase activity. Regulates the expression of DPPA4 and NANOG in the NT2 embryonic carcinoma cells. The sequence is that of Polycomb group RING finger protein 1 (PCGF1) from Homo sapiens (Human).